The primary structure comprises 196 residues: DnaA initiator-associating protein DiaA (196 aa).

Residues 34–196 (LVQSLLNGNK…DNTLFPHQDD (163 aa)) enclose the SIS domain.

This sequence belongs to the SIS family. DiaA subfamily. In terms of assembly, homotetramer; dimer of dimers.

Its function is as follows. Required for the timely initiation of chromosomal replication via direct interactions with the DnaA initiator protein. The sequence is that of DnaA initiator-associating protein DiaA from Shigella boydii serotype 18 (strain CDC 3083-94 / BS512).